Reading from the N-terminus, the 222-residue chain is Kinetochore protein Spc25 (222 aa).

Positions 51–86 (RHQRKVGKLQKVLMERREELDKRVSFIEELDRELEA) form a coiled coil.

This sequence belongs to the SPC25 family. Component of the Ndc80 complex, which is composed of Ndc80, Nuf2 and Spc25.

It localises to the nucleus. The protein resides in the chromosome. Its subcellular location is the centromere. It is found in the kinetochore. In terms of biological role, acts as a component of the essential kinetochore-associated Ndc80 complex, which is required for chromosome segregation and spindle checkpoint activity during meiosis and mitosis. Required for kinetochore integrity and the organization of stable microtubule binding sites in the outer plate of the kinetochore. Participates in SAC signaling that responds specifically to disruptions in spindle microtubule dynamics. The NDC80 complex synergistically enhances the affinity of the SKA1 complex for microtubules and may allow the NDC80 complex to track depolymerizing microtubules. In Drosophila simulans (Fruit fly), this protein is Kinetochore protein Spc25.